We begin with the raw amino-acid sequence, 427 residues long: MNSITLKPIRYIEGEVNLPGSKSLSNRALLIAALAEGTTRITNLLESDDTRHMLNALKLLGVEYTLSEDRTECTVVGNGGPFHTKEPLELFLGNAGTAMRPLCAALTLGSGTYVLTGEPRMKERPIGHLVDALREAGAKITYLENEGYPPLKIEADGLKGGEVRIDGSISSQFLTALLMAAPMARGDMQIDIVGELVSKPYIDITLHIMKQFGVEVRNENYERFFIKGGQIYQALETFMVEGDASSASYFLAAAAIKGGTVKVTGIGKTSVQGDVAFADVLEKMGAKVEWGDDYVSVSRGELNAVNMDFNHIPDAAMTIATTALFAKGTTTLRNIYNWRVKETDRLHAMAMELRKVGAKVEEGEDYLTITPPVQLKHAAIDTYDDHRMAMCFSLLALDPVSVTINEPECTAKTFPTYFEVLESISSY.

Positions 22, 23, and 27 each coordinate 3-phosphoshikimate. Lys22 is a binding site for phosphoenolpyruvate. Phosphoenolpyruvate contacts are provided by Gly96 and Arg124. Ser170, Ser171, Gln172, Ser198, Asp314, Asn337, and Lys341 together coordinate 3-phosphoshikimate. Position 172 (Gln172) interacts with phosphoenolpyruvate. Catalysis depends on Asp314, which acts as the Proton acceptor. 3 residues coordinate phosphoenolpyruvate: Arg345, Arg387, and Lys412.

Belongs to the EPSP synthase family. In terms of assembly, monomer.

The protein localises to the cytoplasm. It carries out the reaction 3-phosphoshikimate + phosphoenolpyruvate = 5-O-(1-carboxyvinyl)-3-phosphoshikimate + phosphate. The protein operates within metabolic intermediate biosynthesis; chorismate biosynthesis; chorismate from D-erythrose 4-phosphate and phosphoenolpyruvate: step 6/7. In terms of biological role, catalyzes the transfer of the enolpyruvyl moiety of phosphoenolpyruvate (PEP) to the 5-hydroxyl of shikimate-3-phosphate (S3P) to produce enolpyruvyl shikimate-3-phosphate and inorganic phosphate. This chain is 3-phosphoshikimate 1-carboxyvinyltransferase, found in Sulfurovum sp. (strain NBC37-1).